The sequence spans 843 residues: Complement component C7 (843 aa).

An N-terminal signal peptide occupies residues 1 to 22 (MKAMSLVFLVGLIGEFQVFSSA). One can recognise a TSP type-1 1 domain in the interval 27–80 (NCQWDSYAPWSECNGCTKTQTRRRPVAVYGQYGGHPCVGSTFETQSCEPTRGCP). 7 cysteine pairs are disulfide-bonded: cysteine 28/cysteine 63, cysteine 39/cysteine 73, cysteine 42/cysteine 79, cysteine 85/cysteine 96, cysteine 91/cysteine 109, cysteine 103/cysteine 119, and cysteine 128/cysteine 165. Tryptophan 36 is a glycosylation site (C-linked (Man) tryptophan). The LDL-receptor class A domain maps to 83–121 (EGCGERFRCFSGQCISKSLVCNGDSDCEEDSADEDRCED). A disordered region spans residues 105–142 (GDSDCEEDSADEDRCEDSESRPSCDLSKPPPNIELTGN). Residues 107–120 (SDCEEDSADEDRCE) are compositionally biased toward acidic residues. An MACPF domain is found at 124-456 (SRPSCDLSKP…EYLDEFDSCH (333 aa)). Residue asparagine 202 is glycosylated (N-linked (GlcNAc...) asparagine). Disulfide bonds link cysteine 337–cysteine 353, cysteine 433–cysteine 560, cysteine 455–cysteine 505, cysteine 457–cysteine 473, cysteine 460–cysteine 475, cysteine 477–cysteine 486, cysteine 512–cysteine 545, cysteine 523–cysteine 535, cysteine 571–cysteine 613, cysteine 599–cysteine 626, cysteine 631–cysteine 673, cysteine 659–cysteine 688, cysteine 702–cysteine 713, cysteine 715–cysteine 750, cysteine 721–cysteine 743, cysteine 728–cysteine 763, cysteine 773–cysteine 782, cysteine 776–cysteine 789, cysteine 791–cysteine 825, cysteine 797–cysteine 818, and cysteine 805–cysteine 838. Residues 457 to 487 (CQPCQNGGMASVEGTQCQCHCKPNTFGVACE) form the EGF-like domain. The TSP type-1 2 domain maps to 500–549 (DGGWSCWSSWGPCAQGKKTRSRKCNNPPPSGGGKSCIGETSESRQCEDED). C-linked (Man) tryptophan glycans are attached at residues tryptophan 503, tryptophan 506, and tryptophan 509. Residues 516-539 (KKTRSRKCNNPPPSGGGKSCIGET) form a disordered region. CCP regions lie at residues 545 to 615 (CEDE…RCGE) and 616 to 693 (DLQW…RKEA). Sushi domains are found at residues 569–628 (EFCP…HCQK) and 629–690 (IACV…QCVR). Factor I module (FIM) stretches follow at residues 695-770 (LAKK…GSAE) and 771-843 (KACG…PEAP). Asparagine 754 carries an N-linked (GlcNAc...) asparagine glycan.

This sequence belongs to the complement C6/C7/C8/C9 family. In terms of assembly, monomer or dimer; as a C5b-7 complex it can also form multimeric rosettes. Component of the membrane attack complex (MAC), composed of complement C5b, C6, C7, C8A, C8B, C8G and multiple copies of the pore-forming subunit C9. Post-translationally, C-, N- and O-glycosylated. O-glycosylated with core 1 or possibly core 8 glycans. In terms of tissue distribution, detected in plasma (at protein level). Bone marrow, heart, intestine, lung, spleen, kidney, liver and thymus.

It localises to the secreted. Its subcellular location is the target cell membrane. With respect to regulation, membrane attack complex (MAC) assembly is inhibited by CD59, thereby protecting self-cells from damage during complement activation. MAC assembly is also inhibited by clusterin (CLU) chaperones that inhibit polymerization of C9. Functionally, component of the membrane attack complex (MAC), a multiprotein complex activated by the complement cascade, which inserts into a target cell membrane and forms a pore, leading to target cell membrane rupture and cell lysis. The MAC is initiated by proteolytic cleavage of C5 into complement C5b in response to the classical, alternative, lectin and GZMK complement pathways. The complement pathways consist in a cascade of proteins that leads to phagocytosis and breakdown of pathogens and signaling that strengthens the adaptive immune system. C7 serves as a membrane anchor. During MAC assembly, associates with C5b and C6 to form the C5b-7 complex, a key lipophilic precursor of the MAC complex, which associates with the outer leaflet and reduces the energy for membrane bending. The chain is Complement component C7 (C7) from Sus scrofa (Pig).